Consider the following 305-residue polypeptide: UDP-3-O-acyl-N-acetylglucosamine deacetylase (305 aa).

Residues H79, H238, and D242 each contribute to the Zn(2+) site. H265 (proton donor) is an active-site residue.

It belongs to the LpxC family. Zn(2+) is required as a cofactor.

The enzyme catalyses a UDP-3-O-[(3R)-3-hydroxyacyl]-N-acetyl-alpha-D-glucosamine + H2O = a UDP-3-O-[(3R)-3-hydroxyacyl]-alpha-D-glucosamine + acetate. The protein operates within glycolipid biosynthesis; lipid IV(A) biosynthesis; lipid IV(A) from (3R)-3-hydroxytetradecanoyl-[acyl-carrier-protein] and UDP-N-acetyl-alpha-D-glucosamine: step 2/6. Its function is as follows. Catalyzes the hydrolysis of UDP-3-O-myristoyl-N-acetylglucosamine to form UDP-3-O-myristoylglucosamine and acetate, the committed step in lipid A biosynthesis. This chain is UDP-3-O-acyl-N-acetylglucosamine deacetylase, found in Salmonella typhi.